The following is a 624-amino-acid chain: Na(+)/H(+) antiporter NhaA (624 aa).

Residues 1-164 are unknown; that stretch reads MNPELPPNHL…TFFINGRRYD (164 aa). The interval 165–624 is na(+)/H(+) antiporter NhaA; that stretch reads GPWDVRSLSE…NAQAEEEKNP (460 aa). 11 helical membrane passes run 199–219, 240–260, 279–299, 319–339, 348–368, 371–391, 407–427, 497–517, 521–541, 565–585, and 596–616; these read GIML…ALGP, LSLR…VVGL, LPIA…LILV, GWGV…AMMG, VFLT…VAIF, GELH…LALL, IVLW…GIIL, FLVL…TSVF, IPLM…GFIT, GAGA…SQAF, and IAIF…LWNA.

It belongs to the NhaA Na(+)/H(+) (TC 2.A.33) antiporter family.

Its subcellular location is the cell inner membrane. The catalysed reaction is Na(+)(in) + 2 H(+)(out) = Na(+)(out) + 2 H(+)(in). Na(+)/H(+) antiporter that extrudes sodium in exchange for external protons. This Nitrosospira multiformis (strain ATCC 25196 / NCIMB 11849 / C 71) protein is Na(+)/H(+) antiporter NhaA.